Consider the following 511-residue polypeptide: Maturase K (511 aa).

This sequence belongs to the intron maturase 2 family. MatK subfamily.

The protein localises to the plastid. The protein resides in the chloroplast. In terms of biological role, usually encoded in the trnK tRNA gene intron. Probably assists in splicing its own and other chloroplast group II introns. The sequence is that of Maturase K from Diplacus aurantiacus (Orange bush monkey flower).